Here is an 836-residue protein sequence, read N- to C-terminus: MTDHTKEHENTPSMGFLDGLVNSISQQPKAIEEEIKFDGALPVLPLRNTVLFPDVIVPIGVARQRSIALLESLAPNSPVVFLMQTDADIDAPTPDELHKNGSVGLVLRTLRMPDNSMSVIVQGVKRVVVEAFTQTEPYLAAKVTPKDEEELEGVEFDAYARTTKQLASKIIELSPNSPNEASYAIQSIENTRFLIHFIASNISVPAAEKQKMIEAEGMKARAERLIHFLNREVQVLELSKQIQTKVKTDMDRSQREFILRQQLKTIQQELGEQDAQMQDVEKLREAVEKKNLPEEVTSVVSKEIDKLSRIPQASPDYSVTRNYVDTILALPWGHFSETVINLHEAEKILNQDHYGLGKVKDRILEYLAVLKLKSNMKAPILCFCGPPGVGKTSLGRSIARALGRKFIRISLGGVRDEAEIRGHRRTYIGSMPGRIIQGIKTAGTSNPVFMLDEIDKIGADFRGNPSSALLEVLDPAQNNAFSDHYLEIPYDLSKVMFIATANTLDPIPVPLRDRMEIINLSGYTEYEKLHIAERYLIPRQLEEHGIRPEDVSFDALTTKKIINAYTREAGVRNLERQIANVCRVIAKDIVIRRESDQPDETPITVVTADLKKYLGMEQFYPDVSEPVMLSGVAVGLAWTPVGGDILFIESTVMKGTGRLILTGQLGDVMKESAQAALSYLKSCADYFKIPDEAFRYWDVHVHVPQGAIPKDGPSAGVTILTSLASIYTQRKVKPCIAMTGEITLRGRILPVGGIKEKVLAAKRAGITEILLPEKNEKDVKEALETNGGAFSDVSFKYFHEMDDLIDYVLEPAENGAPQFKVEDKDHTPETTGNESE.

A Lon N-terminal domain is found at 41–233 (LPVLPLRNTV…RLIHFLNREV (193 aa)). ATP is bound at residue 385–392 (GPPGVGKT). A Lon proteolytic domain is found at 627–811 (VMLSGVAVGL…DDLIDYVLEP (185 aa)). Residues S714 and K757 contribute to the active site. Positions 816-836 (APQFKVEDKDHTPETTGNESE) are disordered.

Belongs to the peptidase S16 family. Homohexamer. Organized in a ring with a central cavity.

It localises to the cytoplasm. The catalysed reaction is Hydrolysis of proteins in presence of ATP.. Its function is as follows. ATP-dependent serine protease that mediates the selective degradation of mutant and abnormal proteins as well as certain short-lived regulatory proteins. Required for cellular homeostasis and for survival from DNA damage and developmental changes induced by stress. Degrades polypeptides processively to yield small peptide fragments that are 5 to 10 amino acids long. Binds to DNA in a double-stranded, site-specific manner. The polypeptide is Lon protease (Chloroherpeton thalassium (strain ATCC 35110 / GB-78)).